The following is a 120-amino-acid chain: Large ribosomal subunit protein uL18 (120 aa).

It belongs to the universal ribosomal protein uL18 family. Part of the 50S ribosomal subunit; part of the 5S rRNA/L5/L18 subcomplex. In B.stearothermophilus only 2 proteins, L5 and L18 have been shown to be part of this subcomplex, unlike the case in E.coli and T.thermophilus where L25 (TL5) is also found. In terms of processing, the protein, when overexpressed in E.coli, contains a phosphoserine, which is required for the protein to bind to 5S rRNA. It has been suggested, based solely on amino acid conservation, that this occurs on Ser-57.

Its function is as follows. This is one of the proteins that bind and probably mediate the attachment of the 5S RNA into the large ribosomal subunit, where it forms part of the central protuberance. In Geobacillus stearothermophilus (Bacillus stearothermophilus), this protein is Large ribosomal subunit protein uL18 (rplR).